The chain runs to 111 residues: Anti-adapter protein IraM (111 aa).

Belongs to the IraM/RssC family.

The protein localises to the cytoplasm. Its function is as follows. Inhibits RpoS proteolysis by regulating RssB activity, thereby increasing the stability of the sigma stress factor RpoS during magnesium starvation. The polypeptide is Anti-adapter protein IraM (Escherichia coli O127:H6 (strain E2348/69 / EPEC)).